The primary structure comprises 369 residues: Erythronate-4-phosphate dehydrogenase (369 aa).

The substrate site is built by Ser45 and Thr66. Asp146 provides a ligand contact to NAD(+). Arg209 is an active-site residue. Asp233 lines the NAD(+) pocket. Glu238 is a catalytic residue. The active-site Proton donor is His255. NAD(+) is bound at residue Gly258.

This sequence belongs to the D-isomer specific 2-hydroxyacid dehydrogenase family. PdxB subfamily. As to quaternary structure, homodimer.

The protein resides in the cytoplasm. It catalyses the reaction 4-phospho-D-erythronate + NAD(+) = (R)-3-hydroxy-2-oxo-4-phosphooxybutanoate + NADH + H(+). It functions in the pathway cofactor biosynthesis; pyridoxine 5'-phosphate biosynthesis; pyridoxine 5'-phosphate from D-erythrose 4-phosphate: step 2/5. Catalyzes the oxidation of erythronate-4-phosphate to 3-hydroxy-2-oxo-4-phosphonooxybutanoate. The protein is Erythronate-4-phosphate dehydrogenase of Porphyromonas gingivalis (strain ATCC BAA-308 / W83).